The sequence spans 293 residues: Urease accessory protein UreD (293 aa).

This sequence belongs to the UreD family. UreD, UreF and UreG form a complex that acts as a GTP-hydrolysis-dependent molecular chaperone, activating the urease apoprotein by helping to assemble the nickel containing metallocenter of UreC. The UreE protein probably delivers the nickel.

The protein localises to the cytoplasm. Functionally, required for maturation of urease via the functional incorporation of the urease nickel metallocenter. This Arthrobacter sp. (strain FB24) protein is Urease accessory protein UreD.